The following is a 912-amino-acid chain: Tiger protein E1 (912 aa).

An N-terminal signal peptide occupies residues 1–22 (MKLKHLTIFLFIFIYRFLFVKS). Residues 23-815 (DCYLINNERP…YSENKSSGFP (793 aa)) lie on the Extracellular side of the membrane. Residues Asn54, Asn108, Asn164, Asn183, Asn232, Asn268, Asn323, Asn356, Asn398, Asn407, Asn568, Asn637, Asn653, Asn658, Asn706, Asn716, Asn763, Asn774, Asn781, and Asn809 are each glycosylated (N-linked (GlcNAc...) asparagine). 2 IPT/TIG domains span residues 532 to 609 (SSDQ…GPFT) and 612 to 686 (PVIE…PLII). In terms of domain architecture, IPT/TIG 3 spans 715 to 796 (TNTSDIDQTA…DGQYFIAQIF (82 aa)). The helical transmembrane segment at 816–836 (NEMYIGIVAIIIFLALIFFAI) threads the bilayer. The Cytoplasmic segment spans residues 837 to 912 (KTQVEKYIEE…IRCCFKEHTD (76 aa)).

It is found in the cell membrane. This is Tiger protein E1 (tgrE1) from Dictyostelium discoideum (Social amoeba).